The following is a 215-amino-acid chain: 3-isopropylmalate dehydratase small subunit (215 aa).

Belongs to the LeuD family. LeuD type 1 subfamily. As to quaternary structure, heterodimer of LeuC and LeuD.

It catalyses the reaction (2R,3S)-3-isopropylmalate = (2S)-2-isopropylmalate. The protein operates within amino-acid biosynthesis; L-leucine biosynthesis; L-leucine from 3-methyl-2-oxobutanoate: step 2/4. Its function is as follows. Catalyzes the isomerization between 2-isopropylmalate and 3-isopropylmalate, via the formation of 2-isopropylmaleate. In Acinetobacter baumannii (strain AB307-0294), this protein is 3-isopropylmalate dehydratase small subunit.